The primary structure comprises 478 residues: Sodium-dependent phosphate transport protein 3 (478 aa).

Residues asparagine 28, asparagine 47, asparagine 56, and asparagine 69 are each glycosylated (N-linked (GlcNAc...) asparagine). 10 helical membrane-spanning segments follow: residues 98–118 (ISYGIILTLIPSGYLAGIFGA), 130–150 (SLLTLFTPLAADFGVILVIVI), 183–203 (SIAGSGAAFGSFIILCVGGLI), 211–231 (FIFYIFGSIGCVCCVLWFTVI), 273–293 (LPLWAIFMGFFSHFWLCTIII), 317–337 (LPFIAASSCTILGGQMADFLL), 341–361 (LLSLITVRKLFSSLGLLLPSL), 363–383 (AVALPFVTSSYIATIVLLILI), 405–425 (YASFLMGISRGFGLTAGIISS), and 442–462 (NVFFLSAAVNMFGLIFYLIFG).

Belongs to the major facilitator superfamily. Sodium/anion cotransporter family. Expressed in the liver, kidney, placenta, lung and thyroid (at protein level).

Its subcellular location is the apical cell membrane. The catalysed reaction is 3 Na(+)(out) + phosphate(out) = 3 Na(+)(in) + phosphate(in). It catalyses the reaction urate(out) + n chloride(in) = urate(in) + n chloride(out). Acts as a membrane potential-dependent organic anion transporter, the transport requires a low concentration of chloride ions. Mediates chloride-dependent transport of urate. Can actively transport inorganic phosphate into cells via Na(+) cotransport. The chain is Sodium-dependent phosphate transport protein 3 (Slc17a2) from Mus musculus (Mouse).